The primary structure comprises 178 residues: Transcriptional repressor NrdR (178 aa).

The disordered stretch occupies residues 1-21; the sequence is MRCPFCGHEDTQVKDSRPHED. Residues 3–34 fold into a zinc finger; sequence CPFCGHEDTQVKDSRPHEDGAAIRRRRICAAC. Over residues 7–21 the composition is skewed to basic and acidic residues; that stretch reads GHEDTQVKDSRPHED. The ATP-cone domain maps to 49-139; that stretch reads LYVVKADDRR…VHWDFRETKD (91 aa).

This sequence belongs to the NrdR family. Requires Zn(2+) as cofactor.

Functionally, negatively regulates transcription of bacterial ribonucleotide reductase nrd genes and operons by binding to NrdR-boxes. The sequence is that of Transcriptional repressor NrdR from Gluconacetobacter diazotrophicus (strain ATCC 49037 / DSM 5601 / CCUG 37298 / CIP 103539 / LMG 7603 / PAl5).